Here is a 502-residue protein sequence, read N- to C-terminus: Lysine--tRNA ligase (502 aa).

The Mg(2+) site is built by E413 and E420.

The protein belongs to the class-II aminoacyl-tRNA synthetase family. In terms of assembly, homodimer. Mg(2+) is required as a cofactor.

It is found in the cytoplasm. It carries out the reaction tRNA(Lys) + L-lysine + ATP = L-lysyl-tRNA(Lys) + AMP + diphosphate. This is Lysine--tRNA ligase from Haemophilus influenzae (strain PittGG).